We begin with the raw amino-acid sequence, 981 residues long: Beta-glucuronidase (981 aa).

Catalysis depends on E500, which acts as the Nucleophile. Mg(2+)-binding residues include N561, W562, I563, S581, and E583.

This sequence belongs to the glycosyl hydrolase 2 family.

The protein resides in the periplasm. The enzyme catalyses a beta-D-glucuronoside + H2O = D-glucuronate + an alcohol. Its function is as follows. Beta-glucuronidase involved in ulvan degradation. Ulvan is the main polysaccharide component of the Ulvales (green seaweed) cell wall. It is composed of disaccharide building blocks comprising 3-sulfated rhamnose (Rha3S) linked to D-glucuronic acid (GlcA), L-iduronic acid (IduA), or D-xylose (Xyl). Beta-glucuronidase removes GlcA side chains present on some O2 residues of Rha3S. Can remove the GlcA side chains from polymeric ulvan or from smaller oligomers. In Formosa agariphila (strain DSM 15362 / KCTC 12365 / LMG 23005 / KMM 3901 / M-2Alg 35-1), this protein is Beta-glucuronidase.